The primary structure comprises 161 residues: MARSFSLAKNPLFWQVAIAGIILDQLSKLWVSQAMDPVGTTWPLWSGVFHFTYVLNTGAAFSAFRGGAGWLKWLSLAVSVGLIIFAGKVPLRKLEQLGYGCILAGAVGNGIDRFLFGHVIDFLDFRLINFPIFNLADVSINIGIAALLWASFFPVSSRKVD.

Helical transmembrane passes span 11–31 (PLFW…KLWV), 44–64 (LWSG…FSAF), 66–86 (GGAG…IIFA), and 100–120 (GCIL…GHVI). Residues aspartate 121 and aspartate 137 contribute to the active site. A helical membrane pass occupies residues 135-155 (LADVSINIGIAALLWASFFPV).

It belongs to the peptidase A8 family.

Its subcellular location is the cell inner membrane. The catalysed reaction is Release of signal peptides from bacterial membrane prolipoproteins. Hydrolyzes -Xaa-Yaa-Zaa-|-(S,diacylglyceryl)Cys-, in which Xaa is hydrophobic (preferably Leu), and Yaa (Ala or Ser) and Zaa (Gly or Ala) have small, neutral side chains.. It functions in the pathway protein modification; lipoprotein biosynthesis (signal peptide cleavage). Its function is as follows. This protein specifically catalyzes the removal of signal peptides from prolipoproteins. This chain is Lipoprotein signal peptidase, found in Synechocystis sp. (strain ATCC 27184 / PCC 6803 / Kazusa).